The sequence spans 139 residues: Large ribosomal subunit protein uL16 (139 aa).

A disordered region spans residues 1 to 23 (MLQPARTKYRKMHKGRMPGSAHR). Basic residues predominate over residues 7 to 16 (TKYRKMHKGR).

The protein belongs to the universal ribosomal protein uL16 family. Part of the 50S ribosomal subunit.

Its function is as follows. Binds 23S rRNA and is also seen to make contacts with the A and possibly P site tRNAs. The sequence is that of Large ribosomal subunit protein uL16 from Myxococcus xanthus (strain DK1622).